Here is a 258-residue protein sequence, read N- to C-terminus: MSFHLSTKERLLLLIDDIEMIAKELIEQAHQKISSTELVDLLDLLVAKDEEFRKMLELAEEQAKVEEAMDQLRAKVEVHDREIQKLQKSLKDAELILSTAIFQARQKLASINQANKRPVSSEELIKYAHRISSANAVSAPLTWCIGDLRRPYPTDIEMRNGLLGKSEQNINGGTVTHQNSGMPSEQQRTLSGSAGSGSGSGAGGEVPNAFQNQFNWNLGELHMTMGASGNTVALETRAQDDVEVMSTDSSSSSSSDSQ.

Residues 52 to 101 are a coiled coil; the sequence is FRKMLELAEEQAKVEEAMDQLRAKVEVHDREIQKLQKSLKDAELILSTAI. 2 disordered regions span residues 164 to 208 and 234 to 258; these read GKSE…EVPN and LETRAQDDVEVMSTDSSSSSSSDSQ. Residues 166-190 are compositionally biased toward polar residues; that stretch reads SEQNINGGTVTHQNSGMPSEQQRTL. A compositionally biased stretch (gly residues) spans 194 to 204; the sequence is AGSGSGSGAGG. Positions 246 to 258 are enriched in low complexity; that stretch reads STDSSSSSSSDSQ.

The protein belongs to the Mediator complex subunit 4 family. As to quaternary structure, component of the Mediator complex, which includes at least MED4, MED6, MED14, MED17, MED18, MED20, MED21, MED23, MED24, MED27, MED30 and MED31. Interacts with MED10 and MED21.

The protein localises to the nucleus. Functionally, component of the Mediator complex, a coactivator involved in the regulated transcription of nearly all RNA polymerase II-dependent genes. Mediator functions as a bridge to convey information from gene-specific regulatory proteins to the basal RNA polymerase II transcription machinery. Mediator is recruited to promoters by direct interactions with regulatory proteins and serves as a scaffold for the assembly of a functional preinitiation complex with RNA polymerase II and the general transcription factors. Required for activated transcription of the MtnA, MtnB and MtnD genes. This Drosophila melanogaster (Fruit fly) protein is Mediator of RNA polymerase II transcription subunit 4 (MED4).